A 2466-amino-acid chain; its full sequence is Highly reducing polyketide synthase apmlA (2466 aa).

The interval 1–57 (MSDHNHTNGTTNGNGIGSNGVQSHVPNGAHINGTSSGLKPNGISNGTTNGINGHAPS) is disordered. Residues 41–53 (NGISNGTTNGING) show a composition bias toward low complexity. A Ketosynthase family 3 (KS3) domain is found at 62 to 491 (QTPVAVVGLA…GTNAHVVLEA (430 aa)). Active-site for beta-ketoacyl synthase activity residues include Cys-235, His-372, and His-412. The malonyl-CoA:ACP transacylase (MAT) domain stretch occupies residues 608 to 921 (IFTGQGAQWS…QYVAAAKRGA (314 aa)). Residue Ser-700 is the For malonyltransferase activity of the active site. Residues 988–1124 (HDLLGSKILS…GLVRIDEEAF (137 aa)) form an N-terminal hotdog fold region. Residues 988 to 1297 (HDLLGSKILS…RFDPISSRGD (310 aa)) are dehydratase (DH) domain. The region spanning 988-1298 (HDLLGSKILS…FDPISSRGDQ (311 aa)) is the PKS/mFAS DH domain. His-1020 serves as the catalytic Proton acceptor; for dehydratase activity. The C-terminal hotdog fold stretch occupies residues 1137 to 1298 (AHPEPGAVGY…FDPISSRGDQ (162 aa)). Residue Asp-1202 is the Proton donor; for dehydratase activity of the active site. Residues 1737–2061 (GTIDSLHYAE…STKHMGKLVL (325 aa)) are enoyl reductase (ER) domain. The interval 2087–2264 (TYLLVGGLKG…STVNLGIIEQ (178 aa)) is ketoreductase (KR) domain. The Carrier domain maps to 2382–2462 (ANLPQVVDAT…FLAEKIITKV (81 aa)). Ser-2422 carries the post-translational modification O-(pantetheine 4'-phosphoryl)serine.

It depends on pantetheine 4'-phosphate as a cofactor.

Its pathway is secondary metabolite biosynthesis. Its function is as follows. Highly reducing polyketide synthase (HR-PKS); part of the gene cluster that mediates the biosynthesis of phaeospelide A, a fungal polyene macrolide with a 34-membered macrolactone ring and an all-trans conjugated hexaene structure. The HR-PKS ApmlA uses acetyl-CoA and malonyl-CoA as its starter and extender units, respectively, and provides the large carbon framework in phaeospelide via 16 cycles of polyketide chain elongation, which is the largest number identified in fungal iterative PKSs thus far. During round 1, the KR domain reduces beta-ketone to an L-oriented hydroxy group, while during later rounds, it provides hydroxy groups in the D-configuration. The characteristic conjugated hexaene moiety is built during the later rounds (10-15), when the KR and DH domains are at work but ER is off. Phylogenetic analysis of the DH domain suggests that a polyene formation is programmed in the DH domain. Finally, the mature ACP-tethered carbon chain is transferred to the serine residue of the thiohydrolase apmlB, followed by intramolecular macrolactonization, generating phaeospelide A. When one elongation cycle during rounds 7-9 is skipped, phaeospelide B is biosynthesized instead. The chain is Highly reducing polyketide synthase apmlA from Arthrinium phaeospermum (Gymnosporium phaeospermum).